We begin with the raw amino-acid sequence, 188 residues long: Elongation factor P-like protein (188 aa).

This sequence belongs to the elongation factor P family.

This is Elongation factor P-like protein from Vibrio parahaemolyticus serotype O3:K6 (strain RIMD 2210633).